We begin with the raw amino-acid sequence, 715 residues long: Ribosomal RNA large subunit methyltransferase K/L (715 aa).

The 112-residue stretch at 43-154 (TQYRALLWSR…RDDLVLSLDL (112 aa)) folds into the THUMP domain.

The protein belongs to the methyltransferase superfamily. RlmKL family.

The protein localises to the cytoplasm. The catalysed reaction is guanosine(2445) in 23S rRNA + S-adenosyl-L-methionine = N(2)-methylguanosine(2445) in 23S rRNA + S-adenosyl-L-homocysteine + H(+). The enzyme catalyses guanosine(2069) in 23S rRNA + S-adenosyl-L-methionine = N(2)-methylguanosine(2069) in 23S rRNA + S-adenosyl-L-homocysteine + H(+). Specifically methylates the guanine in position 2445 (m2G2445) and the guanine in position 2069 (m7G2069) of 23S rRNA. This chain is Ribosomal RNA large subunit methyltransferase K/L, found in Mannheimia succiniciproducens (strain KCTC 0769BP / MBEL55E).